The following is a 343-amino-acid chain: Ketol-acid reductoisomerase (NADP(+)) (343 aa).

The KARI N-terminal Rossmann domain maps to 7–186 (TTVYYDEDAD…GCTRAGVIET (180 aa)). NADP(+)-binding positions include 30-33 (YGSQ), Arg53, Ser56, Ser58, and 88-91 (DTIQ). His112 is a catalytic residue. Residue Gly138 participates in NADP(+) binding. One can recognise a KARI C-terminal knotted domain in the interval 187–329 (SFQEEVETDL…ENLRELFAWG (143 aa)). Asp195, Glu199, Glu231, and Glu235 together coordinate Mg(2+). Ser256 provides a ligand contact to substrate.

Belongs to the ketol-acid reductoisomerase family. It depends on Mg(2+) as a cofactor.

The catalysed reaction is (2R)-2,3-dihydroxy-3-methylbutanoate + NADP(+) = (2S)-2-acetolactate + NADPH + H(+). It carries out the reaction (2R,3R)-2,3-dihydroxy-3-methylpentanoate + NADP(+) = (S)-2-ethyl-2-hydroxy-3-oxobutanoate + NADPH + H(+). Its pathway is amino-acid biosynthesis; L-isoleucine biosynthesis; L-isoleucine from 2-oxobutanoate: step 2/4. It functions in the pathway amino-acid biosynthesis; L-valine biosynthesis; L-valine from pyruvate: step 2/4. Functionally, involved in the biosynthesis of branched-chain amino acids (BCAA). Catalyzes an alkyl-migration followed by a ketol-acid reduction of (S)-2-acetolactate (S2AL) to yield (R)-2,3-dihydroxy-isovalerate. In the isomerase reaction, S2AL is rearranged via a Mg-dependent methyl migration to produce 3-hydroxy-3-methyl-2-ketobutyrate (HMKB). In the reductase reaction, this 2-ketoacid undergoes a metal-dependent reduction by NADPH to yield (R)-2,3-dihydroxy-isovalerate. The protein is Ketol-acid reductoisomerase (NADP(+)) of Haloarcula marismortui (strain ATCC 43049 / DSM 3752 / JCM 8966 / VKM B-1809) (Halobacterium marismortui).